A 1381-amino-acid chain; its full sequence is DNA-directed RNA polymerase subunit beta' (1381 aa).

Cysteine 70, cysteine 72, cysteine 85, and cysteine 88 together coordinate Zn(2+). Mg(2+)-binding residues include aspartate 461, aspartate 463, and aspartate 465. Residues cysteine 801, cysteine 875, cysteine 882, and cysteine 885 each coordinate Zn(2+). The interval 1362–1381 (VEIEGDENSNKKSLDMHAAN) is disordered. Residues 1369–1381 (NSNKKSLDMHAAN) are compositionally biased toward basic and acidic residues.

Belongs to the RNA polymerase beta' chain family. In terms of assembly, the RNAP catalytic core consists of 2 alpha, 1 beta, 1 beta' and 1 omega subunit. When a sigma factor is associated with the core the holoenzyme is formed, which can initiate transcription. Requires Mg(2+) as cofactor. The cofactor is Zn(2+).

The enzyme catalyses RNA(n) + a ribonucleoside 5'-triphosphate = RNA(n+1) + diphosphate. Functionally, DNA-dependent RNA polymerase catalyzes the transcription of DNA into RNA using the four ribonucleoside triphosphates as substrates. The polypeptide is DNA-directed RNA polymerase subunit beta' (Syntrophus aciditrophicus (strain SB)).